The following is a 430-amino-acid chain: POU domain, class 2, transcription factor 3 (430 aa).

4 disordered regions span residues 1 to 40 (MVNL…NGLD), 60 to 81 (HRPC…SGDM), 129 to 180 (LLLP…EPTD), and 248 to 267 (DAES…YPTL). 2 stretches are compositionally biased toward polar residues: residues 23-32 (ARSTFGQVES) and 67-78 (QGPTMMPGNQMS). The span at 129–139 (LLLPQTGPGLT) shows a compositional bias: low complexity. The region spanning 176-250 (DEPTDLEELE…LLEKWLNDAE (75 aa)) is the POU-specific domain. Positions 251-267 (SSPSDPSASTPSSYPTL) are enriched in low complexity. Positions 274–333 (KRKKRTSIETNIRLTLEKRFQDNPKPSSEEISMIAEQLSMEKEVVRVWFCNRRQKEKRIN) form a DNA-binding region, homeobox. Low complexity-rich tracts occupy residues 355 to 364 (SLGSLSVPPV) and 374 to 390 (SSCS…PGSG). Residues 355–413 (SLGSLSVPPVHSTMPGTVTSSCSPGNNSRPSSPGSGLHASSPTASQNNSKAAMNPSSAA) are disordered. Over residues 392-413 (HASSPTASQNNSKAAMNPSSAA) the composition is skewed to polar residues.

Belongs to the POU transcription factor family. Class-2 subfamily. As to quaternary structure, interacts (via the POU domain) with POU2AF1 and POU2AF2 in a DNA-dependent manner; this interaction recruits POU2AF2 to chromatin and increases POU2F3 transactivation activity. In terms of tissue distribution, expressed in epidermis and hair follicles.

The protein resides in the nucleus. Transcription factor that binds to the octamer motif (5'-ATTTGCAT-3') and regulates cell type-specific differentiation pathways. Involved in the regulation of keratinocytes differentiation. The POU2F3-POU2AF2/POU2AF3 complex drives the expression of tuft-cell-specific genes, a rare chemosensory cells that coordinate immune and neural functions within mucosal epithelial tissues. Its function is as follows. Inhibits transactivation by POU2F1. In Rattus norvegicus (Rat), this protein is POU domain, class 2, transcription factor 3 (Pou2f3).